A 253-amino-acid chain; its full sequence is Phosphoadenosine 5'-phosphosulfate reductase (253 aa).

The active-site Nucleophile; cysteine thiosulfonate intermediate is the Cys239.

Belongs to the PAPS reductase family. CysH subfamily.

The protein localises to the cytoplasm. The catalysed reaction is [thioredoxin]-disulfide + sulfite + adenosine 3',5'-bisphosphate + 2 H(+) = [thioredoxin]-dithiol + 3'-phosphoadenylyl sulfate. The protein operates within sulfur metabolism; hydrogen sulfide biosynthesis; sulfite from sulfate: step 3/3. Its function is as follows. Catalyzes the formation of sulfite from phosphoadenosine 5'-phosphosulfate (PAPS) using thioredoxin as an electron donor. This chain is Phosphoadenosine 5'-phosphosulfate reductase, found in Photobacterium profundum (strain SS9).